The chain runs to 307 residues: Probable rRNA-processing protein EBP2 homolog (307 aa).

Disordered regions lie at residues 1-22 (MSDFEMEDSASGYDSGDNSDAE), 189-208 (QRKMGKMLAKQTKVQREAEK), and 236-307 (ESKQ…KGRK). Positions 205–252 (EAEKKDMLDKLKKFRKGKLKNLDFLEDAKALESKQKQSAENRKKRNKK) form a coiled coil. Residues 236–245 (ESKQKQSAEN) show a composition bias toward basic and acidic residues. Basic residues-rich tracts occupy residues 246-266 (RKKRNKKFGFGGKKKGLKRNT) and 294-307 (RLGKSRRIKAKGRK).

This sequence belongs to the EBP2 family.

The protein localises to the nucleus. It localises to the nucleolus. Functionally, required for the processing of the 27S pre-rRNA. This Drosophila melanogaster (Fruit fly) protein is Probable rRNA-processing protein EBP2 homolog.